The following is a 43-amino-acid chain: METATLVAISISGLLVSFTGYALYTAFGQPSEQLRDPFEEHGD.

Residues 5–27 form a helical membrane-spanning segment; the sequence is TLVAISISGLLVSFTGYALYTAF.

Belongs to the PsbN family.

Its subcellular location is the plastid. It localises to the chloroplast thylakoid membrane. Its function is as follows. May play a role in photosystem I and II biogenesis. This chain is Protein PsbN, found in Houttuynia cordata (Chameleon plant).